A 280-amino-acid polypeptide reads, in one-letter code: Vitamin B12-binding protein (280 aa).

The first 27 residues, 1-27, serve as a signal peptide directing secretion; that stretch reads MMPLGLFPLPRAAVVLLISLLTLPAQA. The 248-residue stretch at 30–277 folds into the Fe/B12 periplasmic-binding domain; that stretch reads RVISLSPSTT…QMASIPTPVA (248 aa). Y57 contributes to the cyanocob(III)alamin binding site. C190 and C266 are oxidised to a cystine.

It belongs to the BtuF family. In terms of assembly, the complex is composed of two ATP-binding proteins (BtuD), two transmembrane proteins (BtuC) and a solute-binding protein (BtuF).

Its subcellular location is the periplasm. In terms of biological role, part of the ABC transporter complex BtuCDF involved in vitamin B12 import. Binds vitamin B12 and delivers it to the periplasmic surface of BtuC. This is Vitamin B12-binding protein from Yersinia pseudotuberculosis serotype O:1b (strain IP 31758).